The following is a 61-amino-acid chain: Small ribosomal subunit protein uS14 (61 aa).

Zn(2+) is bound by residues C24, C27, C40, and C43.

It belongs to the universal ribosomal protein uS14 family. Zinc-binding uS14 subfamily. As to quaternary structure, part of the 30S ribosomal subunit. Contacts proteins S3 and S10. Zn(2+) is required as a cofactor.

Its function is as follows. Binds 16S rRNA, required for the assembly of 30S particles and may also be responsible for determining the conformation of the 16S rRNA at the A site. The chain is Small ribosomal subunit protein uS14 from Mycobacterium leprae (strain Br4923).